The following is a 1359-amino-acid chain: DNA-directed RNA polymerase subunit beta (1359 aa).

This sequence belongs to the RNA polymerase beta chain family. The RNAP catalytic core consists of 2 alpha, 1 beta, 1 beta' and 1 omega subunit. When a sigma factor is associated with the core the holoenzyme is formed, which can initiate transcription.

It catalyses the reaction RNA(n) + a ribonucleoside 5'-triphosphate = RNA(n+1) + diphosphate. DNA-dependent RNA polymerase catalyzes the transcription of DNA into RNA using the four ribonucleoside triphosphates as substrates. The chain is DNA-directed RNA polymerase subunit beta from Nitrosococcus oceani (strain ATCC 19707 / BCRC 17464 / JCM 30415 / NCIMB 11848 / C-107).